Here is a 363-residue protein sequence, read N- to C-terminus: GDP-fucose transporter 1 (363 aa).

8 helical membrane-spanning segments follow: residues 33-55 (FLLR…ISMV), 75-97 (VTFY…ATCC), 110-129 (LKVA…MITF), 139-161 (VPFY…YLLL), 166-184 (SFYA…WLGI), 194-213 (SLTG…LNAI), 226-248 (IWRL…MIVL), and 263-285 (AHFW…VTGL).

The protein belongs to the TPT transporter family. SLC35C subfamily.

The protein localises to the golgi apparatus membrane. The enzyme catalyses GMP(out) + GDP-beta-L-fucose(in) = GMP(in) + GDP-beta-L-fucose(out). Functionally, antiporter specific for GDP-l-fucose and depending on the concomitant reverse transport of GMP. Involved in GDP-fucose import from the cytoplasm into the Golgi lumen. This Mus musculus (Mouse) protein is GDP-fucose transporter 1 (Slc35c1).